Here is a 150-residue protein sequence, read N- to C-terminus: MEIEIQTKPFGKMQISEKQILSFPEGLLGFEDYKKFALIEEEEESVFKWLQSVEEVDLAFVVIPPSLFKKEYKPLISEQELQGIGITDLEDGLMLVIVTVPGEDPALMTANMQGPILINKKTLLGKQFISRNESHSVREKILASAAVEMD.

Belongs to the FliW family. Interacts with translational regulator CsrA and flagellin(s).

The protein resides in the cytoplasm. Functionally, acts as an anti-CsrA protein, binds CsrA and prevents it from repressing translation of its target genes, one of which is flagellin. Binds to flagellin and participates in the assembly of the flagellum. This is Flagellar assembly factor FliW from Leptospira borgpetersenii serovar Hardjo-bovis (strain JB197).